A 204-amino-acid polypeptide reads, in one-letter code: Thymidylate kinase (204 aa).

Position 9 to 16 (9 to 16 (GIEASGKT)) interacts with ATP.

Belongs to the thymidylate kinase family.

The catalysed reaction is dTMP + ATP = dTDP + ADP. Its function is as follows. Phosphorylation of dTMP to form dTDP in both de novo and salvage pathways of dTTP synthesis. The polypeptide is Thymidylate kinase (Sulfurihydrogenibium sp. (strain YO3AOP1)).